Reading from the N-terminus, the 278-residue chain is NAD kinase (278 aa).

The Proton acceptor role is filled by D67. NAD(+) is bound by residues 67 to 68, R72, 137 to 138, K148, R165, D167, 178 to 183, A202, and Q237; these read DG, NE, and TGYAMS.

The protein belongs to the NAD kinase family. It depends on a divalent metal cation as a cofactor.

The protein resides in the cytoplasm. It catalyses the reaction NAD(+) + ATP = ADP + NADP(+) + H(+). Functionally, involved in the regulation of the intracellular balance of NAD and NADP, and is a key enzyme in the biosynthesis of NADP. Catalyzes specifically the phosphorylation on 2'-hydroxyl of the adenosine moiety of NAD to yield NADP. The sequence is that of NAD kinase from Thermococcus kodakarensis (strain ATCC BAA-918 / JCM 12380 / KOD1) (Pyrococcus kodakaraensis (strain KOD1)).